The primary structure comprises 266 residues: MTAFTDSITHAHSPSPLTKGTPLALDAITKHYGHRTVLNDVQLRIPSGQFVAIVGRSGCGKSTLLRLLAGLEAASSGELLTGTAPLSSAKDDTRLMFQEARLLPWKKVIDNVGLGLRGNWREKAQDALTSVGLADRANDWPAALSGGQKQRVALARALIHHPRLLLLDEPLGALDALTRIEMQSLIENIWLQHGFTVLLVTHDVSEAIALADRVILIEEGRVGLDITVDLPRPRRRGSAKLAELEARVLERVLAPTSSPLPQQAAI.

In terms of domain architecture, ABC transporter spans Leu23 to Leu244. Gly55–Ser62 contributes to the ATP binding site.

Belongs to the ABC transporter superfamily. Aliphatic sulfonates importer (TC 3.A.1.17.2) family. As to quaternary structure, the complex is composed of two ATP-binding proteins (SsuB), two transmembrane proteins (SsuC) and a solute-binding protein (SsuA).

The protein localises to the cell inner membrane. The catalysed reaction is ATP + H2O + aliphatic sulfonate-[sulfonate-binding protein]Side 1 = ADP + phosphate + aliphatic sulfonateSide 2 + [sulfonate-binding protein]Side 1.. Its function is as follows. Part of the ABC transporter complex SsuABC involved in aliphatic sulfonates import. Responsible for energy coupling to the transport system. This Pectobacterium atrosepticum (strain SCRI 1043 / ATCC BAA-672) (Erwinia carotovora subsp. atroseptica) protein is Aliphatic sulfonates import ATP-binding protein SsuB.